The following is a 507-amino-acid chain: Zinc finger protein Aiolos (507 aa).

Positions 1 to 85 (MEDIQPTVEL…PMGDAEESEM (85 aa)) are disordered. Position 20 is a phosphothreonine (T20). Residues S22 and S42 each carry the phosphoserine modification. Basic and acidic residues-rich tracts occupy residues 33 to 46 (KPHE…REAP) and 56 to 72 (DSMK…ENIM). Glycyl lysine isopeptide (Lys-Gly) (interchain with G-Cter in SUMO2) cross-links involve residues K61, K73, and K100. 3 consecutive C2H2-type zinc fingers follow at residues 117–139 (MNCD…KRSH), 145–167 (FQCN…IKLH), and 173–195 (FKCH…LRTH). Residues 201–223 (YKCEFCGRSYKQRSSLEEHKERC) form a C2H2-type 4; atypical zinc finger. K244 participates in a covalent cross-link: Glycyl lysine isopeptide (Lys-Gly) (interchain with G-Cter in SUMO2). T325 carries the post-translational modification Phosphothreonine. A disordered region spans residues 370-396 (LPSERGLSPNNSAQDSTDTDSNHEDRQ). S377 is subject to Phosphoserine. The C2H2-type 5 zinc-finger motif lies at 450–472 (FRCDHCHVLFLDYVMFTIHMGCH). A mediates homodimerization and heterodimerization region spans residues 450 to 502 (FRCDHCHVLFLDYVMFTIHMGCHGFRDPFECNMCGYRSHDRYEFSSHIARGEH). The C2H2-type 6; atypical zinc finger occupies 478–502 (FECNMCGYRSHDRYEFSSHIARGEH).

The protein belongs to the Ikaros C2H2-type zinc-finger protein family. In terms of assembly, homodimer. Heterodimer with other IKAROS family members. Interacts with IKZF4 and IKZF5. Interacts with HRAS. Interacts with FOXP3; this interaction may be required for silencing target genes and regulating the suppressive activity of FOXP3-positive regulatory T-cells (Treg). Interacts with BCL21L isoform Bcl-X(L); this interaction blocks the anti-apoptotic role of BCL21L. Associates with histone deacetylase complexes containing HDAC1, MTA2 and SIN3A. Interacts with IKZF1. In terms of tissue distribution, expression is restricted to lymphoid tissues. Expressed at highest levels in spleen and at lower levels in the thymus and bone marrow. First detected in more committed lymphoid progenitors and strongly up-regulated as these differentiate into pre-T and pre-B cell precursors.

The protein resides in the nucleus. It is found in the cytoplasm. Its function is as follows. Transcription factor that plays an important role in the regulation of lymphocyte differentiation. Binds to GGGAA. Plays an essential role in regulation of B-cell differentiation, proliferation and maturation to an effector state. Involved in regulating BCL2 expression and controlling apoptosis in T-cells in an IL2-dependent manner. This is Zinc finger protein Aiolos (Ikzf3) from Mus musculus (Mouse).